The primary structure comprises 163 residues: Crossover junction endodeoxyribonuclease RuvC (163 aa).

Residues Asp7, Glu68, and His142 contribute to the active site. The Mg(2+) site is built by Asp7, Glu68, and His142.

Belongs to the RuvC family. In terms of assembly, homodimer which binds Holliday junction (HJ) DNA. The HJ becomes 2-fold symmetrical on binding to RuvC with unstacked arms; it has a different conformation from HJ DNA in complex with RuvA. In the full resolvosome a probable DNA-RuvA(4)-RuvB(12)-RuvC(2) complex forms which resolves the HJ. The cofactor is Mg(2+).

The protein localises to the cytoplasm. It carries out the reaction Endonucleolytic cleavage at a junction such as a reciprocal single-stranded crossover between two homologous DNA duplexes (Holliday junction).. The RuvA-RuvB-RuvC complex processes Holliday junction (HJ) DNA during genetic recombination and DNA repair. Endonuclease that resolves HJ intermediates. Cleaves cruciform DNA by making single-stranded nicks across the HJ at symmetrical positions within the homologous arms, yielding a 5'-phosphate and a 3'-hydroxyl group; requires a central core of homology in the junction. The consensus cleavage sequence is 5'-(A/T)TT(C/G)-3'. Cleavage occurs on the 3'-side of the TT dinucleotide at the point of strand exchange. HJ branch migration catalyzed by RuvA-RuvB allows RuvC to scan DNA until it finds its consensus sequence, where it cleaves and resolves the cruciform DNA. The chain is Crossover junction endodeoxyribonuclease RuvC from Anaplasma phagocytophilum (strain HZ).